The sequence spans 167 residues: Cell number regulator 3 (167 aa).

Residues 67 to 84 (GMTSCGTSAALFALIQWL) traverse the membrane as a helical segment.

Belongs to the cornifelin family. Expressed only in pollen.

It is found in the membrane. The chain is Cell number regulator 3 (CNR3) from Zea mays (Maize).